Reading from the N-terminus, the 534-residue chain is Glycerophosphodiester transporter GIT2 (534 aa).

The next 12 membrane-spanning stretches (helical) occupy residues 63–83, 96–116, 135–155, 163–183, 202–222, 230–250, 289–309, 322–342, 350–370, 377–397, 417–437, and 453–473; these read GAGL…MACL, AISN…LSFG, LIAF…QGFF, FCLG…ASEF, FMID…LWIF, LWRV…FIRL, MIWF…AIIL, WGWS…GAFS, LTLA…SACL, VAAF…GPGG, GIAA…FPAI, and VPFY…FFLC.

The protein belongs to the major facilitator superfamily. Sugar transporter (TC 2.A.1.1) family.

Its subcellular location is the cell membrane. Probable glycerophosphodiester transporter. Does not possess detectable glycerophosphoinositol (GroPIns) transport activity. Might be involved in the uptake of glycerophosphocholine (GroPCho). The expanded ability to utilize GroPIns and GroPCho results from the organism's pathogenic nature and its need to occupy a variety of environments within its host organism. This possibility is buttressed by the fact that GroPIns and GroPCho are present and abundant in human fluids. This is Glycerophosphodiester transporter GIT2 from Candida albicans (strain SC5314 / ATCC MYA-2876) (Yeast).